An 85-amino-acid polypeptide reads, in one-letter code: MNYLVVICFALLLMTGVESGRDAYIADNLNCAYTCGSNSYCNTECTKNGAVSGYCQWLGKYGNACWCINLPDKVPIRIPGACRGR.

The signal sequence occupies residues 1–19 (MNYLVVICFALLLMTGVES). The region spanning 21–83 (RDAYIADNLN…VPIRIPGACR (63 aa)) is the LCN-type CS-alpha/beta domain. Cystine bridges form between cysteine 31–cysteine 82, cysteine 35–cysteine 55, cysteine 41–cysteine 65, and cysteine 45–cysteine 67. An Arginine amide modification is found at arginine 83.

The protein belongs to the long (4 C-C) scorpion toxin superfamily. Sodium channel inhibitor family. Alpha subfamily. As to expression, expressed by the venom gland.

The protein localises to the secreted. In terms of biological role, alpha toxins bind voltage-independently at site-3 of sodium channels (Nav) and inhibit the inactivation of the activated channels, thereby blocking neuronal transmission. This toxin is active against insects (para/tipE). The sequence is that of Alpha-insect toxin BjaIT from Hottentotta judaicus (Black scorpion).